Here is a 141-residue protein sequence, read N- to C-terminus: Auxin-responsive protein SAUR62 (141 aa).

It belongs to the ARG7 family. As to expression, expressed in stamen filaments and petals.

It localises to the cell membrane. Its function is as follows. May promote auxin-stimulated organ elongation, such as hypocotyls, stamen filaments and petals. The sequence is that of Auxin-responsive protein SAUR62 from Arabidopsis thaliana (Mouse-ear cress).